The chain runs to 361 residues: Peptide chain release factor 1 (361 aa).

Q237 carries the post-translational modification N5-methylglutamine. Residues 287-297 (KQQKEQSDTRK) show a composition bias toward basic and acidic residues. The interval 287–307 (KQQKEQSDTRKNLVGSGDRSE) is disordered.

It belongs to the prokaryotic/mitochondrial release factor family. Post-translationally, methylated by PrmC. Methylation increases the termination efficiency of RF1.

The protein resides in the cytoplasm. In terms of biological role, peptide chain release factor 1 directs the termination of translation in response to the peptide chain termination codons UAG and UAA. The protein is Peptide chain release factor 1 of Francisella philomiragia subsp. philomiragia (strain ATCC 25017 / CCUG 19701 / FSC 153 / O#319-036).